Consider the following 386-residue polypeptide: MAESNFVDYVKIYCRSGKGGRGSSHFRREKYIPKGGPDGGDGGRGGHVYLRGNRNYWTLLHLKYERHIMATNGESGSAKRSSGKDGEDRVIEVPCGTVVYDAETGEFICDVTEDGQQVMLLKGGRGGLGNFNFKTATNQAPRYSQPGEPALERTVILQLKLLADVGLVGFPNAGKSTLLSVVSAAKPKIANYPFTTLEPNLGIVSYRDNRSFVMADIPGIIEGASEGKGLGLRFLRHIERNSLLLFMVPAEADDIKKEYEILHNELVKYNPELLDKRRVLAITKSDMLDEELIEALSQDLPEGIPYVFISSITGLGIVELKDLLWKELNKENFHEAERIVHKNIDVSTLEFEDDDEYIFPVDEDEDDPDEEYEEYWDDDEDEDTRK.

The 159-residue stretch at 4 to 162 (SNFVDYVKIY…RTVILQLKLL (159 aa)) folds into the Obg domain. The tract at residues 18-44 (KGGRGSSHFRREKYIPKGGPDGGDGGR) is disordered. Positions 163–329 (ADVGLVGFPN…LKDLLWKELN (167 aa)) constitute an OBG-type G domain. Residues 169–176 (GFPNAGKS), 194–198 (FTTLE), 216–219 (DIPG), 283–286 (TKSD), and 310–312 (SSI) each bind GTP. Mg(2+)-binding residues include S176 and T196. Residues 357-386 (YIFPVDEDEDDPDEEYEEYWDDDEDEDTRK) form a disordered region.

Belongs to the TRAFAC class OBG-HflX-like GTPase superfamily. OBG GTPase family. As to quaternary structure, monomer. Mg(2+) serves as cofactor.

Its subcellular location is the cytoplasm. Its function is as follows. An essential GTPase which binds GTP, GDP and possibly (p)ppGpp with moderate affinity, with high nucleotide exchange rates and a fairly low GTP hydrolysis rate. Plays a role in control of the cell cycle, stress response, ribosome biogenesis and in those bacteria that undergo differentiation, in morphogenesis control. This chain is GTPase Obg, found in Parabacteroides distasonis (strain ATCC 8503 / DSM 20701 / CIP 104284 / JCM 5825 / NCTC 11152).